A 325-amino-acid polypeptide reads, in one-letter code: Myo-inositol dehydrogenase Hyg17 (325 aa).

Belongs to the Gfo/Idh/MocA family.

The catalysed reaction is myo-inositol + NAD(+) = myo-inosose-5 + NADH + H(+). Its pathway is antibiotic biosynthesis. Dehydrogenase involved in the biosynthesis of the aminocyclitol moiety of hygromycin A, a broad-spectrum antibiotic. Catalyzes the NAD(+)-dependent oxidation of myo-inositol to myo-inosose-5 (neo-inosose). Shows reduced activity with scyllo-inositol, minimal activity with L-chiro-inositol and no activity with D-glucose, D-chiro-inositol, epi-inositol, muco-inositol and allo-inositol. Is specific for NAD(+) and cannot use NADP(+). The protein is Myo-inositol dehydrogenase Hyg17 of Streptomyces leeuwenhoekii.